A 194-amino-acid polypeptide reads, in one-letter code: CASP-like protein 4D1 (194 aa).

Topologically, residues 1 to 10 (MASRTVLLPS) are cytoplasmic. Residues 11-31 (AVLILRLLSLGLLAASLALIA) traverse the membrane as a helical segment. Topologically, residues 32-55 (ADKLNVDSDPPQRYTFRDVYAYRY) are extracellular. The helical transmembrane segment at 56 to 76 (VLAVAVIGCAYTLLQLPLAAV) threads the bilayer. Topologically, residues 77-94 (SIIASGNNKRGIGAGGGS) are cytoplasmic. Residues 95-115 (VAVALLVLVLLADVVFALLLA) form a helical membrane-spanning segment. Residues 116 to 161 (TGAAAGFAFTYDVKRYLDGQFDDDSIGTPEVDKLHRDMDKFFDLAY) lie on the Extracellular side of the membrane. The chain crosses the membrane as a helical span at residues 162-182 (AAAGLMLAAAACMALVIMLSV). Residues 183 to 194 (YSLARQVRSDYI) are Cytoplasmic-facing.

Belongs to the Casparian strip membrane proteins (CASP) family. In terms of assembly, homodimer and heterodimers.

Its subcellular location is the cell membrane. This is CASP-like protein 4D1 from Sorghum bicolor (Sorghum).